The following is a 338-amino-acid chain: Phosphatidate cytidylyltransferase, mitochondrial (338 aa).

Belongs to the TAM41 family. It depends on Mg(2+) as a cofactor.

Its subcellular location is the mitochondrion inner membrane. The enzyme catalyses a 1,2-diacyl-sn-glycero-3-phosphate + CTP + H(+) = a CDP-1,2-diacyl-sn-glycerol + diphosphate. It functions in the pathway phospholipid metabolism; CDP-diacylglycerol biosynthesis; CDP-diacylglycerol from sn-glycerol 3-phosphate: step 3/3. In terms of biological role, catalyzes the conversion of phosphatidic acid (PA) to CDP-diacylglycerol (CDP-DAG), an essential intermediate in the synthesis of phosphatidylglycerol, cardiolipin and phosphatidylinositol. This chain is Phosphatidate cytidylyltransferase, mitochondrial (tamm41), found in Xenopus laevis (African clawed frog).